A 167-amino-acid polypeptide reads, in one-letter code: NAD(P)H-quinone oxidoreductase subunit I, chloroplastic (167 aa).

4Fe-4S ferredoxin-type domains lie at 55–84 and 95–124; these read GRIH…VDWK and LNYS…MTEE. [4Fe-4S] cluster is bound by residues cysteine 64, cysteine 67, cysteine 70, cysteine 74, cysteine 104, cysteine 107, cysteine 110, and cysteine 114.

Belongs to the complex I 23 kDa subunit family. NDH is composed of at least 16 different subunits, 5 of which are encoded in the nucleus. [4Fe-4S] cluster serves as cofactor.

The protein localises to the plastid. It is found in the chloroplast thylakoid membrane. It carries out the reaction a plastoquinone + NADH + (n+1) H(+)(in) = a plastoquinol + NAD(+) + n H(+)(out). The catalysed reaction is a plastoquinone + NADPH + (n+1) H(+)(in) = a plastoquinol + NADP(+) + n H(+)(out). Functionally, NDH shuttles electrons from NAD(P)H:plastoquinone, via FMN and iron-sulfur (Fe-S) centers, to quinones in the photosynthetic chain and possibly in a chloroplast respiratory chain. The immediate electron acceptor for the enzyme in this species is believed to be plastoquinone. Couples the redox reaction to proton translocation, and thus conserves the redox energy in a proton gradient. In Barbarea verna (Land cress), this protein is NAD(P)H-quinone oxidoreductase subunit I, chloroplastic.